We begin with the raw amino-acid sequence, 272 residues long: Endoplasmic reticulum resident protein 27 (272 aa).

Residues 1-25 (MEAMPSRCLFLLFLSTCKLSPEVVA) form the signal peptide. Residues 38 to 151 (EPMRLTDVQA…LVTEYNAITA (114 aa)) form the Thioredoxin domain. Residue N99 is glycosylated (N-linked (GlcNAc...) asparagine). The interval 229-232 (DKWD) is PDIA3-binding site. Positions 269 to 272 (KVEL) match the Prevents secretion from ER motif.

The protein belongs to the protein disulfide isomerase family. As to quaternary structure, interacts with PDIA3.

The protein localises to the endoplasmic reticulum lumen. Specifically binds unfolded proteins and may recruit protein disulfide isomerase PDIA3 to unfolded substrates. Binds protein substrates via a hydrophobic pocket in the C-terminal domain. May play a role in the unfolded stress response. In Bos taurus (Bovine), this protein is Endoplasmic reticulum resident protein 27 (ERP27).